We begin with the raw amino-acid sequence, 251 residues long: Chloride intracellular channel protein 5 (251 aa).

The segment at 1-98 (MTDSATTNGD…EEFLEETLTP (98 aa)) is required for insertion into the membrane. Positions 32–35 (CPFS) match the G-site motif. The chain crosses the membrane as a helical span at residues 34-54 (FSQRLFMILWLKGVVFNVTTV). Residues 101 to 241 (YPKLAAKHRE…AADSEIELAY (141 aa)) enclose the GST C-terminal domain.

Belongs to the chloride channel CLIC family. Component of a multimeric complex consisting of several cytoskeletal proteins, including actin, ezrin, alpha-actinin, gelsolin, and IQGAP1. Interacts with AKAP9. Interacts with TPRN. TPRN, CLIC5 and PTPQR form concentric rings at the base of stereocilia and may form a complex. Interacts with EZR, MYO6 and RDX; the proteins may work together as a complex to stabilize linkages between the plasma membrane and subjacent actin cytoskeleton at the stereocilium base. Detected in lung and inner ear. Detected in embryonic cochlea, on microvilli-covered apical surfaces of interdental cells, columnar cells of Kolliker's organ, and on stereocilia of inner and outer hair cells (at protein level). Also detected in the eye, where it localizes to lens fiber cells in the lens epithelium (at protein level).

The protein localises to the golgi apparatus. Its subcellular location is the cytoplasm. It localises to the cytoskeleton. It is found in the microtubule organizing center. The protein resides in the centrosome. The protein localises to the cell cortex. Its subcellular location is the membrane. It localises to the apical cell membrane. It is found in the mitochondrion. The protein resides in the cell projection. The protein localises to the stereocilium. The catalysed reaction is Na(+)(in) = Na(+)(out). It catalyses the reaction K(+)(in) = K(+)(out). The enzyme catalyses chloride(in) = chloride(out). Its activity is regulated as follows. Inhibited by F-actin. In the soluble state, catalyzes glutaredoxin-like thiol disulfide exchange reactions with reduced glutathione as electron donor. Can insert into membranes and form non-selective ion channels almost equally permeable to Na(+), K(+) and Cl(-). Required for normal hearing. Necessary for the formation of stereocilia in the inner ear and normal development of the organ of Corti. Required for the proper localization of PTPRQ and RDX to the stereocilium base during postnatal maturation of hair bundles. Can insert into membranes and form poorly selective ion channels that may also transport chloride ions. Required for the development and/or maintenance of the proper glomerular endothelial cell and podocyte architecture. Plays a role in formation of the lens suture in the eye, which is important for normal optical properties of the lens. The protein is Chloride intracellular channel protein 5 (Clic5) of Mus musculus (Mouse).